The primary structure comprises 51 residues: Large ribosomal subunit protein eL39 (51 aa).

Basic residues predominate over residues 1–15 (MPSHKSFRTKQKLAK). The disordered stretch occupies residues 1–21 (MPSHKSFRTKQKLAKAARQNR).

Belongs to the eukaryotic ribosomal protein eL39 family. In terms of assembly, component of the large ribosomal subunit (LSU). Mature yeast ribosomes consist of a small (40S) and a large (60S) subunit. The 40S small subunit contains 1 molecule of ribosomal RNA (18S rRNA) and at least 33 different proteins. The large 60S subunit contains 3 rRNA molecules (25S, 5.8S and 5S rRNA) and at least 46 different proteins. eL39 interacts with yih1.

It localises to the cytoplasm. Functionally, component of the ribosome, a large ribonucleoprotein complex responsible for the synthesis of proteins in the cell. The small ribosomal subunit (SSU) binds messenger RNAs (mRNAs) and translates the encoded message by selecting cognate aminoacyl-transfer RNA (tRNA) molecules. The large subunit (LSU) contains the ribosomal catalytic site termed the peptidyl transferase center (PTC), which catalyzes the formation of peptide bonds, thereby polymerizing the amino acids delivered by tRNAs into a polypeptide chain. The nascent polypeptides leave the ribosome through a tunnel in the LSU and interact with protein factors that function in enzymatic processing, targeting, and the membrane insertion of nascent chains at the exit of the ribosomal tunnel. The chain is Large ribosomal subunit protein eL39 (rpl39) from Schizosaccharomyces pombe (strain 972 / ATCC 24843) (Fission yeast).